A 262-amino-acid chain; its full sequence is Plant intracellular Ras-group-related LRR protein 7 (262 aa).

9 LRR repeats span residues 19 to 42, 43 to 66, 68 to 89, 90 to 112, 113 to 135, 137 to 158, 159 to 181, 182 to 204, and 206 to 231; these read WRST…VLQV, GNSL…VGTL, NMQR…IGYL, RNLK…LGSL, SNLQ…VGDL, NMLL…IGGC, SSLE…ICNL, VCLK…LLKD, and KALQ…GFTE.

The protein belongs to the SHOC2 family. Widely expressed and preferentially in leaf sheathes.

Leucine-rich repeat protein that likely mediates protein interactions, possibly in the context of signal transduction. In Oryza sativa subsp. japonica (Rice), this protein is Plant intracellular Ras-group-related LRR protein 7 (IRL7).